Reading from the N-terminus, the 373-residue chain is 4-hydroxy-3-methylbut-2-en-1-yl diphosphate synthase (flavodoxin) (373 aa).

Residues cysteine 270, cysteine 273, cysteine 305, and glutamate 312 each coordinate [4Fe-4S] cluster.

This sequence belongs to the IspG family. Requires [4Fe-4S] cluster as cofactor.

The enzyme catalyses (2E)-4-hydroxy-3-methylbut-2-enyl diphosphate + oxidized [flavodoxin] + H2O + 2 H(+) = 2-C-methyl-D-erythritol 2,4-cyclic diphosphate + reduced [flavodoxin]. The protein operates within isoprenoid biosynthesis; isopentenyl diphosphate biosynthesis via DXP pathway; isopentenyl diphosphate from 1-deoxy-D-xylulose 5-phosphate: step 5/6. Its function is as follows. Converts 2C-methyl-D-erythritol 2,4-cyclodiphosphate (ME-2,4cPP) into 1-hydroxy-2-methyl-2-(E)-butenyl 4-diphosphate. In Klebsiella pneumoniae subsp. pneumoniae (strain ATCC 700721 / MGH 78578), this protein is 4-hydroxy-3-methylbut-2-en-1-yl diphosphate synthase (flavodoxin).